We begin with the raw amino-acid sequence, 241 residues long: ATP-dependent Clp protease ATP-binding subunit CLPT2, chloroplastic (241 aa).

A chloroplast-targeting transit peptide spans 1 to 75; it reads MAAHSSCNFA…PRRIHKSAIS (75 aa). Residues 91 to 237 form the Clp R domain; that stretch reads KPKWSWRAIK…ELESFASESG (147 aa). Repeat stretches follow at residues 94–159 and 171–237; these read WSWR…LGKA and LTED…SESG.

It belongs to the ClpA/ClpB family. As to quaternary structure, monomer and homodimer. The dimers monomerize before association to the P-ring. Component of the chloroplastic Clp protease core complex which consist of at least 16 proteins: CLPP4 (3 copies), CLPP5 (3 copies), CLPR4 (2 copies), ClpP1 (1 copy), CLPP6 (1 copy), CLPR2 (1 copy), CLPT1 (1 copy), CLPT2 (1 copy) and 3 copies of CLPP3 and/or CLPR1 and/or CLPR3. Interacts with AHK2. Interacts with CPN21. No interactions with CLPS1.

The protein resides in the plastid. Its subcellular location is the chloroplast. Its function is as follows. Accessory protein regulating the assembly of the plastidial Clp protease system. CLPT1 first binds to the heptameric P-ring containing the CLP3-6 subunits followed by CLPT2, and only then does the P-ring combine with the R-ring composed of the clpP1 and CLPR1-4 subunits. Once the core complex is fully assembled, it then associates to the CLPC chaperone partner to form the functional protease. CLPT2 and CLPT1 are partially redundant. The chain is ATP-dependent Clp protease ATP-binding subunit CLPT2, chloroplastic from Arabidopsis thaliana (Mouse-ear cress).